The following is a 426-amino-acid chain: UDP-N-acetylglucosamine 1-carboxyvinyltransferase 2 (426 aa).

22-23 is a binding site for phosphoenolpyruvate; it reads KN. Position 92 (R92) interacts with UDP-N-acetyl-alpha-D-glucosamine. Catalysis depends on D116, which acts as the Proton donor. UDP-N-acetyl-alpha-D-glucosamine-binding positions include 121 to 125, D307, and I329; that span reads RPIDQ.

This sequence belongs to the EPSP synthase family. MurA subfamily.

Its subcellular location is the cytoplasm. It carries out the reaction phosphoenolpyruvate + UDP-N-acetyl-alpha-D-glucosamine = UDP-N-acetyl-3-O-(1-carboxyvinyl)-alpha-D-glucosamine + phosphate. Its pathway is cell wall biogenesis; peptidoglycan biosynthesis. In terms of biological role, cell wall formation. Adds enolpyruvyl to UDP-N-acetylglucosamine. The protein is UDP-N-acetylglucosamine 1-carboxyvinyltransferase 2 of Lactiplantibacillus plantarum (strain ATCC BAA-793 / NCIMB 8826 / WCFS1) (Lactobacillus plantarum).